We begin with the raw amino-acid sequence, 581 residues long: uncharacterized protein (581 aa).

The N-terminal stretch at 1–28 (MDSKAVSPLIGFVLMLAIIMGLIGIMQA) is a signal peptide.

This is an uncharacterized protein from Archaeoglobus fulgidus (strain ATCC 49558 / DSM 4304 / JCM 9628 / NBRC 100126 / VC-16).